The primary structure comprises 499 residues: Glycerol kinase (499 aa).

ADP is bound at residue T13. T13, T14, and S15 together coordinate ATP. T13 is a binding site for sn-glycerol 3-phosphate. Residue R17 participates in ADP binding. Residues R83, E84, Y135, and D245 each contribute to the sn-glycerol 3-phosphate site. The glycerol site is built by R83, E84, Y135, D245, and Q246. ADP contacts are provided by T267 and G310. The ATP site is built by T267, G310, Q314, and G411. ADP-binding residues include G411 and N415.

It belongs to the FGGY kinase family.

The enzyme catalyses glycerol + ATP = sn-glycerol 3-phosphate + ADP + H(+). The protein operates within polyol metabolism; glycerol degradation via glycerol kinase pathway; sn-glycerol 3-phosphate from glycerol: step 1/1. Its activity is regulated as follows. Inhibited by fructose 1,6-bisphosphate (FBP). Functionally, key enzyme in the regulation of glycerol uptake and metabolism. Catalyzes the phosphorylation of glycerol to yield sn-glycerol 3-phosphate. In Xanthomonas axonopodis pv. citri (strain 306), this protein is Glycerol kinase.